A 198-amino-acid chain; its full sequence is Glycerol-3-phosphate acyltransferase (198 aa).

A run of 6 helical transmembrane segments spans residues 5-25 (YLII…SIAI), 55-75 (VGLA…YLGF), 79-99 (GSLG…LPVL), 114-134 (VLLF…LIVV), 139-159 (YVSL…LIYI), and 164-184 (YIGL…RSNI).

This sequence belongs to the PlsY family. In terms of assembly, probably interacts with PlsX.

The protein localises to the cell membrane. The catalysed reaction is an acyl phosphate + sn-glycerol 3-phosphate = a 1-acyl-sn-glycero-3-phosphate + phosphate. It participates in lipid metabolism; phospholipid metabolism. In terms of biological role, catalyzes the transfer of an acyl group from acyl-phosphate (acyl-PO(4)) to glycerol-3-phosphate (G3P) to form lysophosphatidic acid (LPA). This enzyme utilizes acyl-phosphate as fatty acyl donor, but not acyl-CoA or acyl-ACP. This is Glycerol-3-phosphate acyltransferase from Finegoldia magna (strain ATCC 29328 / DSM 20472 / WAL 2508) (Peptostreptococcus magnus).